The chain runs to 348 residues: Protein RecA (348 aa).

Position 65 to 72 (65 to 72) interacts with ATP; that stretch reads GPESSGKT.

The protein belongs to the RecA family.

The protein localises to the cytoplasm. In terms of biological role, can catalyze the hydrolysis of ATP in the presence of single-stranded DNA, the ATP-dependent uptake of single-stranded DNA by duplex DNA, and the ATP-dependent hybridization of homologous single-stranded DNAs. It interacts with LexA causing its activation and leading to its autocatalytic cleavage. In Enterococcus gallinarum, this protein is Protein RecA.